Consider the following 417-residue polypeptide: Serine hydroxymethyltransferase (417 aa).

Residues L121 and 125 to 127 (GHL) contribute to the (6S)-5,6,7,8-tetrahydrofolate site. Residue K229 is modified to N6-(pyridoxal phosphate)lysine. Residue 354–356 (SPF) participates in (6S)-5,6,7,8-tetrahydrofolate binding.

This sequence belongs to the SHMT family. As to quaternary structure, homodimer. Pyridoxal 5'-phosphate is required as a cofactor.

The protein resides in the cytoplasm. The enzyme catalyses (6R)-5,10-methylene-5,6,7,8-tetrahydrofolate + glycine + H2O = (6S)-5,6,7,8-tetrahydrofolate + L-serine. Its pathway is one-carbon metabolism; tetrahydrofolate interconversion. It participates in amino-acid biosynthesis; glycine biosynthesis; glycine from L-serine: step 1/1. Functionally, catalyzes the reversible interconversion of serine and glycine with tetrahydrofolate (THF) serving as the one-carbon carrier. This reaction serves as the major source of one-carbon groups required for the biosynthesis of purines, thymidylate, methionine, and other important biomolecules. Also exhibits THF-independent aldolase activity toward beta-hydroxyamino acids, producing glycine and aldehydes, via a retro-aldol mechanism. In Dichelobacter nodosus (strain VCS1703A), this protein is Serine hydroxymethyltransferase.